A 120-amino-acid chain; its full sequence is Ribonuclease P protein component (120 aa).

Belongs to the RnpA family. In terms of assembly, consists of a catalytic RNA component (M1 or rnpB) and a protein subunit.

It carries out the reaction Endonucleolytic cleavage of RNA, removing 5'-extranucleotides from tRNA precursor.. Its function is as follows. RNaseP catalyzes the removal of the 5'-leader sequence from pre-tRNA to produce the mature 5'-terminus. It can also cleave other RNA substrates such as 4.5S RNA. The protein component plays an auxiliary but essential role in vivo by binding to the 5'-leader sequence and broadening the substrate specificity of the ribozyme. The protein is Ribonuclease P protein component of Pseudoalteromonas atlantica (strain T6c / ATCC BAA-1087).